A 164-amino-acid polypeptide reads, in one-letter code: uncharacterized protein (164 aa).

This is an uncharacterized protein from Acanthamoeba polyphaga mimivirus (APMV).